A 472-amino-acid chain; its full sequence is Methanethiol oxidase (472 aa).

Ala-2 is subject to N-acetylalanine. Residue Ser-467 is modified to Phosphoserine.

It belongs to the selenium-binding protein family. Interacts with USP33. The N-terminus is blocked.

It is found in the nucleus. It localises to the cytoplasm. The protein resides in the cytosol. The protein localises to the membrane. It catalyses the reaction methanethiol + O2 + H2O = hydrogen sulfide + formaldehyde + H2O2 + H(+). It functions in the pathway organosulfur degradation. In terms of biological role, catalyzes the oxidation of methanethiol, an organosulfur compound known to be produced in substantial amounts by gut bacteria. Selenium-binding protein which may be involved in the sensing of reactive xenobiotics in the cytoplasm. May be involved in intra-Golgi protein transport. The sequence is that of Methanethiol oxidase (SELENBP1) from Bos taurus (Bovine).